Consider the following 491-residue polypeptide: Probable malate:quinone oxidoreductase (491 aa).

The protein belongs to the MQO family. Requires FAD as cofactor.

The catalysed reaction is (S)-malate + a quinone = a quinol + oxaloacetate. It functions in the pathway carbohydrate metabolism; tricarboxylic acid cycle; oxaloacetate from (S)-malate (quinone route): step 1/1. This chain is Probable malate:quinone oxidoreductase, found in Actinobacillus pleuropneumoniae serotype 7 (strain AP76).